The primary structure comprises 412 residues: Diphosphomevalonate decarboxylase MVD1, peroxisomal (412 aa).

23-26 contributes to the (R)-5-diphosphomevalonate binding site; it reads YWGK. A Peroxisomal targeting signal PTS2 motif is present at residues 40–48; that stretch reads SVTLDPDHL. (R)-5-diphosphomevalonate contacts are provided by residues Arg78, 161 to 166, and Thr217; that span reads SGSACR.

This sequence belongs to the diphosphomevalonate decarboxylase family. In terms of assembly, homodimer.

It is found in the peroxisome. It carries out the reaction (R)-5-diphosphomevalonate + ATP = isopentenyl diphosphate + ADP + phosphate + CO2. Its pathway is isoprenoid biosynthesis; isopentenyl diphosphate biosynthesis via mevalonate pathway; isopentenyl diphosphate from (R)-mevalonate: step 3/3. Performs the first committed step in the biosynthesis of isoprene-containing compounds such as sterols and terpenoids. Is specific for (R)-5-diphosphomevalonate (MVAPP). The catalytic efficiency with (R)-5-phosphomevalonate (MVAP) as substrate is 10000-fold lower than for MVAPP. Can complement a yeast mutant defective in MVD activity. The protein is Diphosphomevalonate decarboxylase MVD1, peroxisomal of Arabidopsis thaliana (Mouse-ear cress).